Reading from the N-terminus, the 273-residue chain is WIMGHMVNAIYQIDEFVNLGANSIETDVSFDDNANPEYTYHGIPCDCGRSCLKWENYNDFLKGLRSATTPGNSKYQSKLILVVFDLKTGSLYDNQASEAGKKLAKNLLKHYWNNGNNGGGAYIVLSIPDLNHYPLIKGFTDTLKQEGHPELLEKVGYDFSGNDAVGDVAKAYKKAGVSGHVWQSDGITNCLLRGLTRVKEAVANRDSGNGYINKVYYWTVDKRATTRDALDAGVDGVMTNYPDVIADVMNEAAYKNKVRLATYEDSPWVTFKK.

H5 is a catalytic residue. Mg(2+)-binding residues include E25 and D27. The active-site Nucleophile is H41. Disulfide bonds link C45-C51 and C47-C190. D85 lines the Mg(2+) pocket.

This sequence belongs to the arthropod phospholipase D family. Class II subfamily. Mg(2+) is required as a cofactor. Expressed by the venom gland.

It is found in the secreted. It carries out the reaction an N-(acyl)-sphingosylphosphocholine = an N-(acyl)-sphingosyl-1,3-cyclic phosphate + choline. The enzyme catalyses an N-(acyl)-sphingosylphosphoethanolamine = an N-(acyl)-sphingosyl-1,3-cyclic phosphate + ethanolamine. It catalyses the reaction a 1-acyl-sn-glycero-3-phosphocholine = a 1-acyl-sn-glycero-2,3-cyclic phosphate + choline. The catalysed reaction is a 1-acyl-sn-glycero-3-phosphoethanolamine = a 1-acyl-sn-glycero-2,3-cyclic phosphate + ethanolamine. Dermonecrotic toxins cleave the phosphodiester linkage between the phosphate and headgroup of certain phospholipids (sphingolipid and lysolipid substrates), forming an alcohol (often choline) and a cyclic phosphate. This toxin acts on sphingomyelin (SM). It may also act on ceramide phosphoethanolamine (CPE), lysophosphatidylcholine (LPC) and lysophosphatidylethanolamine (LPE), but not on lysophosphatidylserine (LPS), and lysophosphatidylglycerol (LPG). It acts by transphosphatidylation, releasing exclusively cyclic phosphate products as second products. Induces dermonecrosis, hemolysis, increased vascular permeability, edema, inflammatory response, and platelet aggregation. In Loxosceles hirsuta (Recluse spider), this protein is Dermonecrotic toxin LhSicTox-alphaIA2avi.